A 609-amino-acid chain; its full sequence is Glutamine--fructose-6-phosphate aminotransferase [isomerizing] (609 aa).

Cysteine 2 serves as the catalytic Nucleophile; for GATase activity. Positions 2–218 (CGIVGAIAQR…EGDIAEITRR (217 aa)) constitute a Glutamine amidotransferase type-2 domain. 2 consecutive SIS domains span residues 286 to 426 (ADDL…LKGL) and 458 to 599 (LAED…VDQP). The active-site For Fru-6P isomerization activity is lysine 604.

Homodimer.

The protein resides in the cytoplasm. The enzyme catalyses D-fructose 6-phosphate + L-glutamine = D-glucosamine 6-phosphate + L-glutamate. Catalyzes the first step in hexosamine metabolism, converting fructose-6P into glucosamine-6P using glutamine as a nitrogen source. The polypeptide is Glutamine--fructose-6-phosphate aminotransferase [isomerizing] (Salmonella typhi).